The following is a 60-amino-acid chain: Putative transcriptional regulator XtpA (60 aa).

Its function is as follows. Controls the expression of small non-coding RNA GcvB, which represses the expression of many amino acid transporter proteins and uptake of aminoglycoside antibiotics in cells. Might be a transcriptional activator. An RNA (xtr) with a tRNA-like fold possibly derived from tRNA-Arg(UCG) is encoded entirely within the protein; xtr does not have the sequence corresponding to tRNA anticodon or variable arms. 10 synonymous codon changes in the xtr region of xtpA have the same phenotype as a deletion mutation, suggesting the mRNA secondary structure is important for function. The polypeptide is Putative transcriptional regulator XtpA (Escherichia coli (strain K12)).